A 322-amino-acid polypeptide reads, in one-letter code: Beta-1,4-galactosyltransferase 7 (322 aa).

Residues 1–9 (MVNISTINW) are Cytoplasmic-facing. Residues 10 to 30 (VFVCGLSFCLGGIAVLSLMPL) form a helical; Signal-anchor for type II membrane protein membrane-spanning segment. The Lumenal portion of the chain corresponds to 31–322 (GSDCVCPLSN…TAAAASAVQT (292 aa)). 4 residues coordinate UDP-alpha-D-galactose: proline 82, arginine 84, aspartate 145, and valine 146. Position 147 (aspartate 147) interacts with Mn(2+). Positions 177, 185, 207, and 208 each coordinate UDP-alpha-D-galactose. Leucine 209 is a binding site for beta-D-xylose. Glutamate 210 contributes to the UDP-alpha-D-galactose binding site. Beta-D-xylose contacts are provided by aspartate 211 and aspartate 212. Asparagine 236 is a glycosylation site (N-linked (GlcNAc...) asparagine). Positions 241, 243, and 250 each coordinate UDP-alpha-D-galactose. The Mn(2+) site is built by histidine 241 and histidine 243. Disulfide bonds link cysteine 255-cysteine 310 and cysteine 300-cysteine 308.

This sequence belongs to the glycosyltransferase 7 family. Mn(2+) serves as cofactor. As to expression, expressed in male and female adults. Expressed in head.

It is found in the golgi apparatus membrane. The enzyme catalyses 3-O-(beta-D-xylosyl)-L-seryl-[protein] + UDP-alpha-D-galactose = 3-O-(beta-D-galactosyl-(1-&gt;4)-beta-D-xylosyl)-L-seryl-[protein] + UDP + H(+). The protein operates within protein modification; protein glycosylation. Functionally, transfers galactose from UDP-D-Galactose (UDP-Gal) to the acceptor xylose residue in the linkage tetrasaccharide region of the glycosaminoglycan side chain of proteoglycans. No activity towards beta-GlcNAc, beta-Glc, beta-Gal, and beta-GalNAc as acceptors. The protein is Beta-1,4-galactosyltransferase 7 of Drosophila melanogaster (Fruit fly).